Reading from the N-terminus, the 399-residue chain is Protein translocase subunit SecD (399 aa).

6 consecutive transmembrane segments (helical) span residues Ile7 to Pro27, Val239 to Val259, Ile262 to Leu282, Gly286 to Ala306, Ala329 to Gly351, and Gly357 to Leu381.

It belongs to the SecD/SecF family. SecD subfamily. As to quaternary structure, forms a complex with SecF. Part of the essential Sec protein translocation apparatus which comprises SecA, SecYEG and auxiliary proteins SecDF. Other proteins may also be involved.

Its subcellular location is the cell inner membrane. Its function is as follows. Part of the Sec protein translocase complex. Interacts with the SecYEG preprotein conducting channel. SecDF uses the proton motive force (PMF) to complete protein translocation after the ATP-dependent function of SecA. The sequence is that of Protein translocase subunit SecD from Dictyoglomus turgidum (strain DSM 6724 / Z-1310).